The primary structure comprises 438 residues: V-type ATP synthase beta chain (438 aa).

Belongs to the ATPase alpha/beta chains family.

Produces ATP from ADP in the presence of a proton gradient across the membrane. The V-type beta chain is a regulatory subunit. The polypeptide is V-type ATP synthase beta chain (Chlamydia felis (strain Fe/C-56) (Chlamydophila felis)).